Here is a 704-residue protein sequence, read N- to C-terminus: Elongation factor G (704 aa).

One can recognise a tr-type G domain in the interval 6–282 (NKVRNIGIMA…AVIDYLPTPL (277 aa)). Residues 15 to 22 (AHIDAGKT), 79 to 83 (DTPGH), and 133 to 136 (NKMD) contribute to the GTP site.

The protein belongs to the TRAFAC class translation factor GTPase superfamily. Classic translation factor GTPase family. EF-G/EF-2 subfamily.

The protein localises to the cytoplasm. Catalyzes the GTP-dependent ribosomal translocation step during translation elongation. During this step, the ribosome changes from the pre-translocational (PRE) to the post-translocational (POST) state as the newly formed A-site-bound peptidyl-tRNA and P-site-bound deacylated tRNA move to the P and E sites, respectively. Catalyzes the coordinated movement of the two tRNA molecules, the mRNA and conformational changes in the ribosome. This Corynebacterium diphtheriae (strain ATCC 700971 / NCTC 13129 / Biotype gravis) protein is Elongation factor G.